We begin with the raw amino-acid sequence, 300 residues long: Probable membrane transporter protein YtnM (300 aa).

8 helical membrane-spanning segments follow: residues L4–A24, L33–V53, L76–G96, Y102–Y122, I139–V159, L206–V226, P231–I251, and V260–L280.

Belongs to the 4-toluene sulfonate uptake permease (TSUP) (TC 2.A.102) family.

Its subcellular location is the cell membrane. The polypeptide is Probable membrane transporter protein YtnM (ytnM) (Bacillus subtilis (strain 168)).